Consider the following 163-residue polypeptide: UPF0416 protein RBE_1121 (163 aa).

It belongs to the UPF0416 family.

The polypeptide is UPF0416 protein RBE_1121 (Rickettsia bellii (strain RML369-C)).